A 611-amino-acid polypeptide reads, in one-letter code: O-fucosyltransferase 8 (611 aa).

Residues 1–29 are disordered; sequence MGKQGSPRSPRPETIDKEEKFGRRSLDSL. Residues 10–26 show a composition bias toward basic and acidic residues; it reads PRPETIDKEEKFGRRSL. The chain crosses the membrane as a helical; Signal-anchor for type II membrane protein span at residues 78 to 98; the sequence is IVLMISVTGFIFCMDSIMVSI. N-linked (GlcNAc...) asparagine glycans are attached at residues N115, N216, and N270. A substrate-binding site is contributed by 386 to 388; that stretch reads HLR. N506 carries N-linked (GlcNAc...) asparagine glycosylation.

This sequence belongs to the glycosyltransferase GT106 family.

The protein resides in the membrane. The protein operates within glycan metabolism. The protein is O-fucosyltransferase 8 of Arabidopsis thaliana (Mouse-ear cress).